We begin with the raw amino-acid sequence, 329 residues long: Thioredoxin domain-containing protein 6 (329 aa).

Residues 11–115 (QVNINTQELW…QKTILQQLEA (105 aa)) form the Thioredoxin domain. The interval 157-303 (GKTCTLGIIK…LFPSFKFSDK (147 aa)) is NDK. The tract at residues 303–329 (KDKEAPPGAEAQTMVGPVEDPCMSERI) is disordered.

This sequence belongs to the NDK family. Monomer and homodimer. Expressed in lung airway epithelium (at protein level).

The protein localises to the cytoplasm. The protein resides in the cytoskeleton. Its subcellular location is the cilium axoneme. It is found in the dynein axonemal particle. In terms of biological role, may be a regulator of microtubule physiology. In Mus musculus (Mouse), this protein is Thioredoxin domain-containing protein 6.